Here is a 593-residue protein sequence, read N- to C-terminus: Aspartate--tRNA ligase (593 aa).

Glutamate 180 is a binding site for L-aspartate. The segment at 204 to 207 is aspartate; it reads QIFK. L-aspartate is bound at residue arginine 226. ATP-binding positions include 226-228 and glutamine 235; that span reads RDE. Position 453 (histidine 453) interacts with L-aspartate. ATP is bound at residue glutamate 487. An L-aspartate-binding site is contributed by arginine 494. 539–542 is an ATP binding site; the sequence is GLDR.

It belongs to the class-II aminoacyl-tRNA synthetase family. Type 1 subfamily. As to quaternary structure, homodimer.

The protein resides in the cytoplasm. The enzyme catalyses tRNA(Asp) + L-aspartate + ATP = L-aspartyl-tRNA(Asp) + AMP + diphosphate. Catalyzes the attachment of L-aspartate to tRNA(Asp) in a two-step reaction: L-aspartate is first activated by ATP to form Asp-AMP and then transferred to the acceptor end of tRNA(Asp). The chain is Aspartate--tRNA ligase from Clostridium botulinum (strain Kyoto / Type A2).